Reading from the N-terminus, the 177-residue chain is ADP-ribosylation factor-like protein 17 (177 aa).

Glycine 2 is lipidated: N-myristoyl glycine. Residues 24 to 31, 67 to 71, and 125 to 128 each bind GTP; these read SLDTAGKT, DVGSH, and LPHS.

Belongs to the small GTPase superfamily. Arf family.

The protein resides in the golgi apparatus. Functionally, GTP-binding protein that functions as an allosteric activator of the cholera toxin catalytic subunit, an ADP-ribosyltransferase. Involved in protein trafficking; may modulate vesicle budding and uncoating within the Golgi apparatus. This chain is ADP-ribosylation factor-like protein 17 (ARL17A), found in Homo sapiens (Human).